A 382-amino-acid chain; its full sequence is MGLLLPLALCILVLCCGAMSPPQLALNPSALLSRGCNDSDVLAVAGFALRDINKDRKDGYVLRLNRVNDAQEYRRGGLGSLFYLTLDVLETDCHVLRKKAWQDCGMRIFFESVYGQCKAIFYMNNPSRVLYLAAYNCTLRPVSKKKIYMTCPDCPSSIPTDSSNHQVLEAATESLAKYNNENTSKQYSLFKVTRASSQWVVGPSYFVEYLIKESPCTKSQASSCSLQSSDSVPVGLCKGSLTRTHWEKFVSVTCDFFESQAPATGSENSAVNQKPTNLPKVEESQQKNTPPTDSPSKAGPRGSVQYLPDLDDKNSQEKGPQEAFPVHLDLTTNPQGETLDISFLFLEPMEEKLVVLPFPKEKARTAECPGPAQNASPLVLPP.

The first 15 residues, 1–15 (MGLLLPLALCILVLC), serve as a signal peptide directing secretion. Cystatin fetuin-B-type domains are found at residues 25 to 138 (ALNP…YNCT) and 149 to 255 (MTCP…VTCD). N-linked (GlcNAc...) asparagine glycosylation occurs at Asn37. 3 disulfide bridges follow: Cys93-Cys104, Cys117-Cys137, and Cys151-Cys154. N-linked (GlcNAc...) asparagine glycosylation occurs at Asn136. Residue Asn182 is glycosylated (N-linked (GlcNAc...) asparagine). Intrachain disulfides connect Cys216–Cys224 and Cys237–Cys254. 2 stretches are compositionally biased toward polar residues: residues 262-276 (PATGSENSAVNQKPT) and 286-295 (QKNTPPTDSP). Disordered stretches follow at residues 262 to 320 (PATG…EKGP) and 363 to 382 (ARTAECPGPAQNASPLVLPP). Thr289 and Thr292 each carry an O-linked (GalNAc...) threonine glycan. Residues 310 to 320 (LDDKNSQEKGP) show a composition bias toward basic and acidic residues. Ser315 bears the Phosphoserine mark.

Belongs to the fetuin family. As to expression, liver and testis.

It localises to the secreted. Its function is as follows. Protease inhibitor required for egg fertilization. Required to prevent premature zona pellucida hardening before fertilization, probably by inhibiting the protease activity of ASTL, a protease that mediates the cleavage of ZP2 and triggers zona pellucida hardening. This is Fetuin-B (FETUB) from Homo sapiens (Human).